The primary structure comprises 161 residues: Small ribosomal subunit protein uS9 (161 aa).

The interval 1–38 (MAQTITSLADLKQGPGAEPAGLSAEPQEPKLDKEGRAY) is disordered. Residues 27–38 (QEPKLDKEGRAY) show a composition bias toward basic and acidic residues.

This sequence belongs to the universal ribosomal protein uS9 family.

The protein is Small ribosomal subunit protein uS9 of Rhodospirillum centenum (strain ATCC 51521 / SW).